The sequence spans 660 residues: Acetyl-coenzyme A synthetase (660 aa).

CoA contacts are provided by residues 197–200 (RGGK) and T317. ATP-binding positions include 397–399 (GEP), 421–426 (DTFWQT), D512, and R528. S536 is a CoA binding site. R539 contacts ATP. 2 residues coordinate Mg(2+): V550 and V555. K625 is subject to N6-acetyllysine.

Belongs to the ATP-dependent AMP-binding enzyme family. Requires Mg(2+) as cofactor. Acetylated. Deacetylation by the SIR2-homolog deacetylase activates the enzyme.

It carries out the reaction acetate + ATP + CoA = acetyl-CoA + AMP + diphosphate. Its function is as follows. Catalyzes the conversion of acetate into acetyl-CoA (AcCoA), an essential intermediate at the junction of anabolic and catabolic pathways. AcsA undergoes a two-step reaction. In the first half reaction, AcsA combines acetate with ATP to form acetyl-adenylate (AcAMP) intermediate. In the second half reaction, it can then transfer the acetyl group from AcAMP to the sulfhydryl group of CoA, forming the product AcCoA. This chain is Acetyl-coenzyme A synthetase, found in Herminiimonas arsenicoxydans.